The primary structure comprises 361 residues: Chorismate synthase (361 aa).

The NADP(+) site is built by arginine 48 and arginine 54. FMN-binding positions include 125–127 (RSS), 238–239 (NA), glycine 278, 293–297 (KPTSS), and arginine 319.

It belongs to the chorismate synthase family. Homotetramer. FMNH2 serves as cofactor.

It carries out the reaction 5-O-(1-carboxyvinyl)-3-phosphoshikimate = chorismate + phosphate. The protein operates within metabolic intermediate biosynthesis; chorismate biosynthesis; chorismate from D-erythrose 4-phosphate and phosphoenolpyruvate: step 7/7. Its function is as follows. Catalyzes the anti-1,4-elimination of the C-3 phosphate and the C-6 proR hydrogen from 5-enolpyruvylshikimate-3-phosphate (EPSP) to yield chorismate, which is the branch point compound that serves as the starting substrate for the three terminal pathways of aromatic amino acid biosynthesis. This reaction introduces a second double bond into the aromatic ring system. This chain is Chorismate synthase, found in Yersinia pseudotuberculosis serotype IB (strain PB1/+).